Consider the following 346-residue polypeptide: Histidinol-phosphate aminotransferase (346 aa).

Lys-209 carries the post-translational modification N6-(pyridoxal phosphate)lysine.

Belongs to the class-II pyridoxal-phosphate-dependent aminotransferase family. Histidinol-phosphate aminotransferase subfamily. As to quaternary structure, homodimer. It depends on pyridoxal 5'-phosphate as a cofactor.

It catalyses the reaction L-histidinol phosphate + 2-oxoglutarate = 3-(imidazol-4-yl)-2-oxopropyl phosphate + L-glutamate. Its pathway is amino-acid biosynthesis; L-histidine biosynthesis; L-histidine from 5-phospho-alpha-D-ribose 1-diphosphate: step 7/9. The polypeptide is Histidinol-phosphate aminotransferase (Vibrio vulnificus (strain CMCP6)).